Reading from the N-terminus, the 253-residue chain is Phosphoadenosine 5'-phosphosulfate reductase (253 aa).

Cys-239 (nucleophile; cysteine thiosulfonate intermediate) is an active-site residue.

Belongs to the PAPS reductase family. CysH subfamily.

It is found in the cytoplasm. It catalyses the reaction [thioredoxin]-disulfide + sulfite + adenosine 3',5'-bisphosphate + 2 H(+) = [thioredoxin]-dithiol + 3'-phosphoadenylyl sulfate. The protein operates within sulfur metabolism; hydrogen sulfide biosynthesis; sulfite from sulfate: step 3/3. Functionally, catalyzes the formation of sulfite from phosphoadenosine 5'-phosphosulfate (PAPS) using thioredoxin as an electron donor. The protein is Phosphoadenosine 5'-phosphosulfate reductase of Aliivibrio fischeri (strain ATCC 700601 / ES114) (Vibrio fischeri).